The sequence spans 371 residues: Sensor histidine kinase YvfT (371 aa).

The Extracellular segment spans residues 1 to 10 (MKKAISIFPK). A helical membrane pass occupies residues 11–31 (EFGFFPYIFLVYTIMPFLSLL). Residues 32 to 38 (KESGVKQ) are Cytoplasmic-facing. A helical transmembrane segment spans residues 39-59 (GIGYGMLLLFVAAYRQLFCSV). Residues 60–71 (GKASFTYWLIVQ) lie on the Extracellular side of the membrane. Residues 72 to 92 (MAVILMYSVFYNITYIYLGFF) form a helical membrane-spanning segment. At 93–109 (PANFVGYYKEKTNFNRA) the chain is on the cytoplasmic side. The helical transmembrane segment at 110–130 (FCALIFILLFPCLYQFIANSV) threads the bilayer. Over 131 to 135 (SLREL) the chain is Extracellular. The helical transmembrane segment at 136–156 (FSVLPFLVIMLISPFGIRSMF) threads the bilayer. Over 157–371 (RRIELEAKLA…LTIPLIKKAE (215 aa)) the chain is Cytoplasmic. The region spanning 187 to 368 (DLHDTLGHTL…VVALTIPLIK (182 aa)) is the Histidine kinase domain. Phosphohistidine; by autocatalysis is present on His189.

The protein localises to the cell membrane. The catalysed reaction is ATP + protein L-histidine = ADP + protein N-phospho-L-histidine.. Its function is as follows. Member of the two-component regulatory system YvfT/YvfU. Probably activates YvfU by phosphorylation. The protein is Sensor histidine kinase YvfT (yvfT) of Bacillus subtilis (strain 168).